The chain runs to 157 residues: 3-hydroxyacyl-[acyl-carrier-protein] dehydratase FabZ (157 aa).

His-58 is an active-site residue.

Belongs to the thioester dehydratase family. FabZ subfamily.

The protein resides in the cytoplasm. It catalyses the reaction a (3R)-hydroxyacyl-[ACP] = a (2E)-enoyl-[ACP] + H2O. Functionally, involved in unsaturated fatty acids biosynthesis. Catalyzes the dehydration of short chain beta-hydroxyacyl-ACPs and long chain saturated and unsaturated beta-hydroxyacyl-ACPs. The polypeptide is 3-hydroxyacyl-[acyl-carrier-protein] dehydratase FabZ (Brucella ovis (strain ATCC 25840 / 63/290 / NCTC 10512)).